Reading from the N-terminus, the 177-residue chain is Nucleoside triphosphate/diphosphate phosphatase (177 aa).

Arg23 functions as the Proton donor in the catalytic mechanism. Mg(2+) is bound by residues Asn87, Asp103, Asp105, Asp107, Asp120, and Glu123.

It belongs to the Ntdp family. Requires Mg(2+) as cofactor.

It catalyses the reaction a ribonucleoside 5'-triphosphate + H2O = a ribonucleoside 5'-diphosphate + phosphate + H(+). The enzyme catalyses a ribonucleoside 5'-diphosphate + H2O = a ribonucleoside 5'-phosphate + phosphate + H(+). Its function is as follows. Has nucleoside phosphatase activity towards nucleoside triphosphates and nucleoside diphosphates. In Streptococcus gordonii (strain Challis / ATCC 35105 / BCRC 15272 / CH1 / DL1 / V288), this protein is Nucleoside triphosphate/diphosphate phosphatase.